Reading from the N-terminus, the 84-residue chain is MAVKRAPSKKVRAEQARRPKKNPLIAAGIETVDYKDVNLLRTFISDRGKIRSRRVTGLTPQQQRQVAVAVKNAREMALLPFTSR.

Residues 1 to 10 (MAVKRAPSKK) are compositionally biased toward basic residues. Positions 1–20 (MAVKRAPSKKVRAEQARRPK) are disordered.

Belongs to the bacterial ribosomal protein bS18 family. As to quaternary structure, part of the 30S ribosomal subunit. Forms a tight heterodimer with protein bS6.

In terms of biological role, binds as a heterodimer with protein bS6 to the central domain of the 16S rRNA, where it helps stabilize the platform of the 30S subunit. The sequence is that of Small ribosomal subunit protein bS18B from Nocardia farcinica (strain IFM 10152).